Consider the following 156-residue polypeptide: Urease accessory protein UreE (156 aa).

The segment at 133 to 156 (RPESGAYGSGRTMGHDHGPFHVHA) is disordered. Residues 145–156 (MGHDHGPFHVHA) are compositionally biased toward basic and acidic residues.

The protein belongs to the UreE family.

It localises to the cytoplasm. Involved in urease metallocenter assembly. Binds nickel. Probably functions as a nickel donor during metallocenter assembly. This is Urease accessory protein UreE from Rhodobacter capsulatus (Rhodopseudomonas capsulata).